The primary structure comprises 200 residues: Probable molybdenum cofactor guanylyltransferase (200 aa).

GTP is bound by residues 9–11 (LAG), K21, D69, and D100. D100 provides a ligand contact to Mg(2+).

This sequence belongs to the MobA family. Requires Mg(2+) as cofactor.

It localises to the cytoplasm. It catalyses the reaction Mo-molybdopterin + GTP + H(+) = Mo-molybdopterin guanine dinucleotide + diphosphate. Functionally, transfers a GMP moiety from GTP to Mo-molybdopterin (Mo-MPT) cofactor (Moco or molybdenum cofactor) to form Mo-molybdopterin guanine dinucleotide (Mo-MGD) cofactor. This chain is Probable molybdenum cofactor guanylyltransferase, found in Bacillus cereus (strain ATCC 10987 / NRS 248).